We begin with the raw amino-acid sequence, 328 residues long: Small neutral protease regulatory protein (328 aa).

Residues 1 to 60 form the HTH lysR-type domain; that stretch reads MELEVRHLRALCAIADAGSLHRAARRLGVAQPTLSTQLTRIEQALGGPLFTRERTGCRPT. Positions 20-39 form a DNA-binding region, H-T-H motif; the sequence is LHRAARRLGVAQPTLSTQLT.

The protein belongs to the LysR transcriptional regulatory family.

In terms of biological role, transcriptional trans-activator of the gene (mprA) for the small neutral protease. The protein is Small neutral protease regulatory protein (mprR) of Streptomyces coelicolor (strain ATCC BAA-471 / A3(2) / M145).